Here is a 140-residue protein sequence, read N- to C-terminus: CBS domain-containing protein YhcV (140 aa).

CBS domains lie at 8-64 (MTTQ…GRDG) and 72-127 (MSTE…NESA).

The chain is CBS domain-containing protein YhcV (yhcV) from Bacillus subtilis (strain 168).